The chain runs to 410 residues: NADH-quinone oxidoreductase subunit H (410 aa).

Helical transmembrane passes span 16–36 (LILAKSLGVFVFLLLTVLAAI), 84–104 (WIYLAAPVISVIPAFMAFAVI), 124–144 (LPVAVLYILAVTSIGVYGIVL), 165–185 (VISYEIAMALSFVAVFIYAGT), 198–218 (VWFIFLLLPSFLVYLTSMVGE), 260–280 (VSALATTLFLGGWHAPWPISI), 288–308 (WWPLLWFTAKVWLFLFFFMWL), 320–340 (FMRLGWKLLIPVSLAWIAIVA), and 353–373 (WVTALIGVAGVAAILASLLAW). Positions 384–410 (SHSPPAQSSDHGAFPVPPLPVKEPADA) are disordered.

Belongs to the complex I subunit 1 family. NDH-1 is composed of 14 different subunits. Subunits NuoA, H, J, K, L, M, N constitute the membrane sector of the complex.

It is found in the cell membrane. It catalyses the reaction a quinone + NADH + 5 H(+)(in) = a quinol + NAD(+) + 4 H(+)(out). In terms of biological role, NDH-1 shuttles electrons from NADH, via FMN and iron-sulfur (Fe-S) centers, to quinones in the respiratory chain. The immediate electron acceptor for the enzyme in this species is believed to be menaquinone. Couples the redox reaction to proton translocation (for every two electrons transferred, four hydrogen ions are translocated across the cytoplasmic membrane), and thus conserves the redox energy in a proton gradient. The sequence is that of NADH-quinone oxidoreductase subunit H from Mycolicibacterium gilvum (strain PYR-GCK) (Mycobacterium gilvum (strain PYR-GCK)).